Reading from the N-terminus, the 236-residue chain is 2-C-methyl-D-erythritol 4-phosphate cytidylyltransferase (236 aa).

The protein belongs to the IspD/TarI cytidylyltransferase family. IspD subfamily. As to quaternary structure, homodimer.

It catalyses the reaction 2-C-methyl-D-erythritol 4-phosphate + CTP + H(+) = 4-CDP-2-C-methyl-D-erythritol + diphosphate. It functions in the pathway isoprenoid biosynthesis; isopentenyl diphosphate biosynthesis via DXP pathway; isopentenyl diphosphate from 1-deoxy-D-xylulose 5-phosphate: step 2/6. In terms of biological role, catalyzes the formation of 4-diphosphocytidyl-2-C-methyl-D-erythritol from CTP and 2-C-methyl-D-erythritol 4-phosphate (MEP). The sequence is that of 2-C-methyl-D-erythritol 4-phosphate cytidylyltransferase from Escherichia coli O157:H7.